Consider the following 101-residue polypeptide: MIPGEYQLADGDIQANVGRKTVKLEVVNTGDRPIQVGSHYHFFETNHALKFDRLQARGMRLNVPSGNAVRFEPGEAKEVELVEFGGNKVIYGFHNEIDGKL.

This sequence belongs to the urease beta subunit family. As to quaternary structure, heterotrimer of UreA (gamma), UreB (beta) and UreC (alpha) subunits. Three heterotrimers associate to form the active enzyme.

It is found in the cytoplasm. The enzyme catalyses urea + 2 H2O + H(+) = hydrogencarbonate + 2 NH4(+). It functions in the pathway nitrogen metabolism; urea degradation; CO(2) and NH(3) from urea (urease route): step 1/1. This is Urease subunit beta from Actinobacillus pleuropneumoniae serotype 5b (strain L20).